An 84-amino-acid chain; its full sequence is Omega-theraphotoxin-Pm1a (84 aa).

Residues 1-21 (MKTSMLAVFVALPLAFVLTAA) form the signal peptide. The propeptide occupies 22–45 (TEERAHPNELVNSLVELVKLDAER). 3 disulfide bridges follow: Cys52–Cys66, Cys59–Cys71, and Cys65–Cys78.

Belongs to the neurotoxin 10 (Hwtx-1) family. 41 (Jztx-36) subfamily. In terms of tissue distribution, expressed by the venom gland.

It localises to the secreted. Functionally, omega-conotoxins act at presynaptic membranes, they bind and block voltage-gated calcium channels (Cav). This toxin inhibits barium currents (IBa) mediated by L-type voltage-gated calcium channels Cav1.2/CACNA1C (IC(50)=825 nM) and Cav1.3/CACNA1C (IC(50)=2240 nM). The chain is Omega-theraphotoxin-Pm1a from Pelinobius muticus (King baboon spider).